Reading from the N-terminus, the 220-residue chain is Ribonuclease P protein subunit p29 (220 aa).

At serine 10 the chain carries Phosphoserine.

The protein belongs to the eukaryotic/archaeal RNase P protein component 1 family. In terms of assembly, component of nuclear RNase P and RNase MRP ribonucleoproteins. RNase P consists of a catalytic RNA moiety and 10 different protein chains; POP1, POP4, POP5, POP7, RPP14, RPP21, RPP25, RPP30, RPP38 and RPP40. Within the RNase P complex, POP1, POP7 and RPP25 form the 'finger' subcomplex, POP5, RPP14, RPP40 and homodimeric RPP30 form the 'palm' subcomplex, and RPP21, POP4 and RPP38 form the 'wrist' subcomplex. All subunits of the RNase P complex interact with the catalytic RNA. Several subunits of RNase P are also part of the RNase MRP complex. RNase MRP consists of a catalytic RNA moiety and about 8 protein subunits; POP1, POP7, RPP25, RPP30, RPP38, RPP40 and possibly also POP4 and POP5.

The protein resides in the nucleus. The protein localises to the nucleolus. Component of ribonuclease P, a ribonucleoprotein complex that generates mature tRNA molecules by cleaving their 5'-ends. This Homo sapiens (Human) protein is Ribonuclease P protein subunit p29 (POP4).